The primary structure comprises 707 residues: 65-kDa microtubule-associated protein 3 (707 aa).

Coiled coils occupy residues 49–84, 157–179, 269–289, 354–374, and 464–486; these read LEVY…CSAM, NLSM…EKID, QQEY…ITEA, IVDA…IKEE, and LEEY…DQKK. The interval 495 to 574 is disordered; the sequence is QEALYGSKPS…PSRKQSMNPS (80 aa). Low complexity predominate over residues 500–512; that stretch reads GSKPSPSKPLGGK. A phosphoserine mark is found at Ser-504 and Ser-528.

It belongs to the MAP65/ASE1 family. In terms of assembly, forms a dimer. Binds to microtubules (MT) during cell division. Bundles polymerized MT via the formation of 25-nm crossbridges with centrally located endocytic MT, and midline phragmoplast MT. Expressed in all tissues enriched in dividing cells, such as the root and shoot apical meristem, foliar primordia, and young leaves, and embryos.

It is found in the nucleus. It localises to the cytoplasm. The protein resides in the cytoskeleton. Its subcellular location is the phragmoplast. In terms of biological role, microtubule-associated protein that plays a critical role in organizing the mitotic microtubule array during both early and late mitosis in all plant organs. Essential for the cytokinesis, especially in roots, by maintaining the integrity of the overlapped microtubules in the phragmoplast. Required during root morphogenesis. Needed for giant cell development during root knot nematode infection, where cytokinesis is initiated but not completed. This is 65-kDa microtubule-associated protein 3 (MAP65-3) from Arabidopsis thaliana (Mouse-ear cress).